The sequence spans 251 residues: Aspartate/glutamate leucyltransferase (251 aa).

This sequence belongs to the R-transferase family. Bpt subfamily.

It localises to the cytoplasm. The catalysed reaction is N-terminal L-glutamyl-[protein] + L-leucyl-tRNA(Leu) = N-terminal L-leucyl-L-glutamyl-[protein] + tRNA(Leu) + H(+). It carries out the reaction N-terminal L-aspartyl-[protein] + L-leucyl-tRNA(Leu) = N-terminal L-leucyl-L-aspartyl-[protein] + tRNA(Leu) + H(+). In terms of biological role, functions in the N-end rule pathway of protein degradation where it conjugates Leu from its aminoacyl-tRNA to the N-termini of proteins containing an N-terminal aspartate or glutamate. The polypeptide is Aspartate/glutamate leucyltransferase (Xanthomonas axonopodis pv. citri (strain 306)).